A 427-amino-acid polypeptide reads, in one-letter code: MDLQYQSGFANHFSTEAVPGALPVGQNSPQAPPYGLYAEQLSGTAFTAPRHENRRSWLYRLRPSAGHGPYAPYVQERLKSGPFGAAVPTPNRLRWDPLEIPEAPLDFVDGLVTLAGNGDVATQAGMAAHLYLANRSMIDRVFQNADGELLIVPQLGALRFVTELGVIDAAPGEVVVIPRGVRFRVELEGPVRGYVCENYGPMFRLPELGPIGSNGLANSRDFLTPVAAFEDVERPTEVIQKFQGGLWTGTWDHSPLDVVAWHGNLAPYKYDLARFNTMGTVSFDHPDPSIFTVLTAPSEIPGTANVDFVIFPPRWMVAEHTFRPPWFHRNVMSEFMGLVTGAYDAKAGGFSPGGASLHNMMSDHGPDVASHKAASEADLSPHKIEATMAFMFESRWVIRPTKYALETSELQADYDACWTGFPKAKLP.

The active-site Proton acceptor is the H285. Residues H328 and E334 each coordinate Fe cation. Y343 and H364 together coordinate homogentisate. H364 lines the Fe cation pocket.

Belongs to the homogentisate dioxygenase family. In terms of assembly, hexamer; dimer of trimers. Requires Fe cation as cofactor.

The catalysed reaction is homogentisate + O2 = 4-maleylacetoacetate + H(+). The protein operates within amino-acid degradation; L-phenylalanine degradation; acetoacetate and fumarate from L-phenylalanine: step 4/6. Involved in the catabolism of homogentisate (2,5-dihydroxyphenylacetate or 2,5-OH-PhAc), a central intermediate in the degradation of phenylalanine and tyrosine. Catalyzes the oxidative ring cleavage of the aromatic ring of homogentisate to yield maleylacetoacetate. This Caulobacter sp. (strain K31) protein is Homogentisate 1,2-dioxygenase.